Here is a 1852-residue protein sequence, read N- to C-terminus: Voltage-dependent L-type calcium channel subunit alpha-1S (1852 aa).

The segment at M1–I23 is disordered. Residues M1–K51 are Cytoplasmic-facing. The I repeat unit spans residues N38–F337. A helical transmembrane segment spans residues P52–V70. At Y71 to G85 the chain is on the extracellular side. N79 carries N-linked (GlcNAc...) asparagine glycosylation. A helical membrane pass occupies residues L86–I106. Over A107–D115 the chain is Cytoplasmic. The helical transmembrane segment at A116–T136 threads the bilayer. The Extracellular portion of the chain corresponds to V137–D160. A helical membrane pass occupies residues V161 to V179. Residues P180–L196 are Cytoplasmic-facing. The chain crosses the membrane as a helical span at residues F197–F218. Topologically, residues K219–G279 are extracellular. 2 cysteine pairs are disulfide-bonded: C226-C254 and C245-C261. N257 carries an N-linked (GlcNAc...) asparagine glycan. Residues F280–V301 constitute an intramembrane region (pore-forming). A Selectivity filter of repeat I motif is present at residues S290–G293. Ca(2+) is bound at residue E292. Over N302–W309 the chain is Extracellular. The helical transmembrane segment at P310–L330 threads the bilayer. Topologically, residues G331–K432 are cytoplasmic. Residues Q357–E374 form a binding to the beta subunit region. Residues S393 and S397 each carry the phosphoserine modification. An II repeat occupies N418–L664. A helical transmembrane segment spans residues V433–S451. Over E452 to H462 the chain is Extracellular. The helical transmembrane segment at L463–M483 threads the bilayer. Residues Y484–S494 lie on the Cytoplasmic side of the membrane. Residues I495–V514 traverse the membrane as a helical segment. The Extracellular portion of the chain corresponds to E515–G523. A helical transmembrane segment spans residues I524–W542. Residues T543–S561 lie on the Cytoplasmic side of the membrane. The helical transmembrane segment at L562–F581 threads the bilayer. At G582 to P601 the chain is on the extracellular side. The segment at residues Q602–G623 is an intramembrane region (pore-forming). The short motif at T612–D615 is the Selectivity filter of repeat II element. E614 contacts Ca(2+). Residues I624–P633 lie on the Extracellular side of the membrane. The chain crosses the membrane as a helical span at residues G634 to L653. At N654–T799 the chain is on the cytoplasmic side. 2 disordered regions span residues K675–E712 and E731–R757. S687 carries the phosphoserine; by PKA modification. The span at L690–G711 shows a compositional bias: basic and acidic residues. Residues P742–E751 are compositionally biased toward acidic residues. The stretch at E768–F1068 is one III repeat. A helical membrane pass occupies residues W800–A818. At E819 to Q830 the chain is on the extracellular side. Residues I831–K850 form a helical membrane-spanning segment. Residues M851–N866 lie on the Cytoplasmic side of the membrane. Residues Y867–L885 traverse the membrane as a helical segment. At E886–V892 the chain is on the extracellular side. A helical membrane pass occupies residues V893–A911. Topologically, residues K912–N930 are cytoplasmic. The helical transmembrane segment at I931–F950 threads the bilayer. Residues K951 to V1000 are Extracellular-facing. C957 and C968 form a disulfide bridge. The tract at residues R988–K1077 is dihydropyridine binding. Positions L1001–Y1021 form an intramembrane region, pore-forming. Positions T1012–G1015 match the Selectivity filter of repeat III motif. Residue E1014 participates in Ca(2+) binding. The Extracellular portion of the chain corresponds to K1022–R1038. The helical transmembrane segment at V1039–F1060 threads the bilayer. Residues V1061–S1118 lie on the Cytoplasmic side of the membrane. Residues N1105 to F1384 form an IV repeat. Residues Y1119–Y1140 form a helical membrane-spanning segment. A glycan (N-linked (GlcNAc...) asparagine) is linked at N1141. Residues N1141–H1148 lie on the Extracellular side of the membrane. Residues I1149 to I1170 traverse the membrane as a helical segment. Over A1171–D1180 the chain is Cytoplasmic. A helical transmembrane segment spans residues P1181 to S1200. The Extracellular portion of the chain corresponds to E1201–S1231. Residues S1232–A1250 form a helical membrane-spanning segment. The Cytoplasmic segment spans residues E1251–P1268. Residues Y1269–F1289 traverse the membrane as a helical segment. Residues G1290–Q1311 lie on the Extracellular side of the membrane. The segment at residues A1312–L1330 is an intramembrane region (pore-forming). Positions T1321–A1324 match the Selectivity filter of repeat IV motif. The Extracellular portion of the chain corresponds to A1331–F1356. The interval L1337–K1403 is dihydropyridine binding. Cysteines 1338 and 1352 form a disulfide. 2 phenylalkylamine binding regions span residues E1349–W1391 and E1349–S1392. The helical transmembrane segment at A1357–M1381 threads the bilayer. At D1382 to P1852 the chain is on the cytoplasmic side. The tract at residues K1522–E1542 is interaction with calmodulin. The residue at position 1575 (S1575) is a Phosphoserine; by PKA and CAMK2. T1579 bears the Phosphothreonine mark. At S1617 the chain carries Phosphoserine; by PKA. Disordered regions lie at residues G1702–K1721 and T1727–R1762. Residues K1747–K1757 show a composition bias toward basic and acidic residues.

This sequence belongs to the calcium channel alpha-1 subunit (TC 1.A.1.11) family. CACNA1S subfamily. In terms of assembly, component of a calcium channel complex consisting of a pore-forming alpha subunit (CACNA1S) and the ancillary subunits CACNB1 or CACNB2, CACNG1 and CACNA2D1. The channel complex contains alpha, beta, gamma and delta subunits in a 1:1:1:1 ratio, i.e. it contains either CACNB1 or CACNB2. CACNA1S channel activity is modulated by the auxiliary subunits (CACNB1 or CACNB2, CACNG1 and CACNA2D1). Interacts with DYSF and JSRP1. Interacts with RYR1. Interacts with STAC, STAC2 and STAC3 (via their SH3 domains). Interacts with CALM. The alpha-1S subunit is found in two isoforms in the skeletal muscle: a minor form of 212 kDa containing the complete amino acid sequence, and a major form of 190 kDa derived from the full-length form by post-translational proteolysis close to Phe-1690. In terms of processing, phosphorylated. Phosphorylation by PKA activates the calcium channel. Both the minor and major forms are phosphorylated in vitro by PKA. Phosphorylation at Ser-1575 is involved in beta-adrenergic-mediated regulation of the channel.

The protein resides in the cell membrane. The protein localises to the sarcolemma. It is found in the T-tubule. The enzyme catalyses Ca(2+)(in) = Ca(2+)(out). Its activity is regulated as follows. Channel activity is blocked by dihydropyridines (DHP), phenylalkylamines, and by benzothiazepines. Its function is as follows. Pore-forming, alpha-1S subunit of the voltage-gated calcium channel that gives rise to L-type calcium currents in skeletal muscle. Calcium channels containing the alpha-1S subunit play an important role in excitation-contraction coupling in skeletal muscle via their interaction with RYR1, which triggers Ca(2+) release from the sarcplasmic reticulum and ultimately results in muscle contraction. Long-lasting (L-type) calcium channels belong to the 'high-voltage activated' (HVA) group. In Mus musculus (Mouse), this protein is Voltage-dependent L-type calcium channel subunit alpha-1S (Cacna1s).